The following is a 712-amino-acid chain: UvrABC system protein B (712 aa).

A Helicase ATP-binding domain is found at 35–421 (RRVQAGEKDV…SDGAVEQIIR (387 aa)). 48 to 55 (GATGTGKS) serves as a coordination point for ATP. The Beta-hairpin signature appears at 101-124 (YYDYYQPEAYVPQSDTYIEKDSSI). Positions 438-604 (QIDDLVHEIR…PLRKKINDIV (167 aa)) constitute a Helicase C-terminal domain. The disordered stretch occupies residues 625–655 (TKEGKGAKAPVPALGGQKTGGAKAARGRAKE). Residues 667–702 (AEQIEDLTTRMRAAAADLQFEIAARLRDEVSEMKKE) enclose the UVR domain.

This sequence belongs to the UvrB family. In terms of assembly, forms a heterotetramer with UvrA during the search for lesions. Interacts with UvrC in an incision complex.

The protein resides in the cytoplasm. Functionally, the UvrABC repair system catalyzes the recognition and processing of DNA lesions. A damage recognition complex composed of 2 UvrA and 2 UvrB subunits scans DNA for abnormalities. Upon binding of the UvrA(2)B(2) complex to a putative damaged site, the DNA wraps around one UvrB monomer. DNA wrap is dependent on ATP binding by UvrB and probably causes local melting of the DNA helix, facilitating insertion of UvrB beta-hairpin between the DNA strands. Then UvrB probes one DNA strand for the presence of a lesion. If a lesion is found the UvrA subunits dissociate and the UvrB-DNA preincision complex is formed. This complex is subsequently bound by UvrC and the second UvrB is released. If no lesion is found, the DNA wraps around the other UvrB subunit that will check the other stand for damage. The polypeptide is UvrABC system protein B (Streptomyces coelicolor (strain ATCC BAA-471 / A3(2) / M145)).